A 138-amino-acid chain; its full sequence is MQKIHDHTPNPTQILGFITLFVSGAVLLFLTGLTLTGTVVGLVVLTPVLIFFSPILIPLATVLFVAVAGFLSAGGFGLAALSAISWLYNYIKGRHPPGADQIDYARMRIADTATHVKDYAREYGGYLQSKIQDAAPGA.

3 helical membrane-spanning segments follow: residues 14–34 (ILGFITLFVSGAVLLFLTGLT), 48–68 (VLIFFSPILIPLATVLFVAVA), and 69–89 (GFLSAGGFGLAALSAISWLYN). The Proline-knot motif lies at 47–58 (PVLIFFSPILIP).

It belongs to the oleosin family. Expressed in megagametophytes (at protein level).

It is found in the lipid droplet. The protein localises to the membrane. This chain is Oleosin G, found in Pinus massoniana (Chinese red pine).